Consider the following 334-residue polypeptide: Holliday junction branch migration complex subunit RuvB (334 aa).

Positions E4 to Y184 are large ATPase domain (RuvB-L). ATP is bound by residues I23, R24, G65, K68, T69, T70, E131–Y133, R174, Y184, and R221. Residue T69 coordinates Mg(2+). A small ATPAse domain (RuvB-S) region spans residues D185 to E255. The tract at residues N258–Q334 is head domain (RuvB-H). Positions 313 and 318 each coordinate DNA.

It belongs to the RuvB family. In terms of assembly, homohexamer. Forms an RuvA(8)-RuvB(12)-Holliday junction (HJ) complex. HJ DNA is sandwiched between 2 RuvA tetramers; dsDNA enters through RuvA and exits via RuvB. An RuvB hexamer assembles on each DNA strand where it exits the tetramer. Each RuvB hexamer is contacted by two RuvA subunits (via domain III) on 2 adjacent RuvB subunits; this complex drives branch migration. In the full resolvosome a probable DNA-RuvA(4)-RuvB(12)-RuvC(2) complex forms which resolves the HJ.

The protein resides in the cytoplasm. The enzyme catalyses ATP + H2O = ADP + phosphate + H(+). The RuvA-RuvB-RuvC complex processes Holliday junction (HJ) DNA during genetic recombination and DNA repair, while the RuvA-RuvB complex plays an important role in the rescue of blocked DNA replication forks via replication fork reversal (RFR). RuvA specifically binds to HJ cruciform DNA, conferring on it an open structure. The RuvB hexamer acts as an ATP-dependent pump, pulling dsDNA into and through the RuvAB complex. RuvB forms 2 homohexamers on either side of HJ DNA bound by 1 or 2 RuvA tetramers; 4 subunits per hexamer contact DNA at a time. Coordinated motions by a converter formed by DNA-disengaged RuvB subunits stimulates ATP hydrolysis and nucleotide exchange. Immobilization of the converter enables RuvB to convert the ATP-contained energy into a lever motion, pulling 2 nucleotides of DNA out of the RuvA tetramer per ATP hydrolyzed, thus driving DNA branch migration. The RuvB motors rotate together with the DNA substrate, which together with the progressing nucleotide cycle form the mechanistic basis for DNA recombination by continuous HJ branch migration. Branch migration allows RuvC to scan DNA until it finds its consensus sequence, where it cleaves and resolves cruciform DNA. The polypeptide is Holliday junction branch migration complex subunit RuvB (Psychromonas ingrahamii (strain DSM 17664 / CCUG 51855 / 37)).